A 495-amino-acid chain; its full sequence is Catalase B (495 aa).

Positions 1 to 25 (MSNNKKLTSLFGAPVSDRENSMTAG) are disordered. Active-site residues include H55 and N128. Y338 provides a ligand contact to heme.

This sequence belongs to the catalase family. As to quaternary structure, homodimer. The cofactor is heme.

The enzyme catalyses 2 H2O2 = O2 + 2 H2O. Functionally, decomposes hydrogen peroxide into water and oxygen; serves to protect cells from the toxic effects of hydrogen peroxide. The protein is Catalase B (katB) of Staphylococcus xylosus.